Consider the following 555-residue polypeptide: Probable metabolite transport protein YDR387C (555 aa).

Residues 1–39 (MSTDESEDVYSDLYSIISQVTSNTANDIEQLPYALTFKT) are Cytoplasmic-facing. Residues 40–60 (SLIFVGATIGGLLFGYDTGVI) traverse the membrane as a helical segment. Topologically, residues 61 to 83 (SGVLLSLKPEDLSLVVLTDVQKE) are extracellular. The helical transmembrane segment at 84 to 104 (LITSSTSVGSFFGSILAFPLA) threads the bilayer. The Cytoplasmic portion of the chain corresponds to 105–118 (DRYGRRITLAICCS). Residues 119-139 (IFILAAIGMAIARTLTFLICG) traverse the membrane as a helical segment. Arg-140 is a topological domain (extracellular). The chain crosses the membrane as a helical span at residues 141–161 (LLVGIAVGVSAQCVPLFLSEI). Topologically, residues 162–168 (SPSRIRG) are cytoplasmic. A helical membrane pass occupies residues 169–189 (FMLTLNIIAITGGQLVSYVIA). The Extracellular segment spans residues 190–200 (SLMKEIDNSWR). Residues 201-221 (YLFALSAIPAILFLSILDFIP) form a helical membrane-spanning segment. Residues 222-356 (ESPRWSISKG…TIRALIVGCM (135 aa)) lie on the Cytoplasmic side of the membrane. The interval 289–313 (SSTSGTLSPPNIKRLSSNTERTSNT) is disordered. A helical transmembrane segment spans residues 357 to 377 (LMFFQQITGFNAFMYYAAIIF). Residues 378 to 384 (SKFNIKN) are Extracellular-facing. The chain crosses the membrane as a helical span at residues 385-405 (PLLPPILIASTNFIFTFFAMY). Residues 406–413 (TMDSLGRR) are Cytoplasmic-facing. Residues 414 to 434 (AILLRTILIMTVGLLLCSVGF) form a helical membrane-spanning segment. The Extracellular portion of the chain corresponds to 435–440 (GHDQVN). A helical transmembrane segment spans residues 441-461 (LLLISVVIYVAAYASAMGSVP). The Cytoplasmic segment spans residues 462 to 474 (WTCVEFLPLNRRS). The helical transmembrane segment at 475–497 (FGASCIACTNWLTNAFVSMTYLS) threads the bilayer. Residues 498-506 (TINTIGDEN) lie on the Extracellular side of the membrane. Residues 507–527 (TMLIFAFFTVCAWFFVYFWYP) traverse the membrane as a helical segment. Residues 528–555 (EVKGLSLEEVGRVFDNGIDVHYVFRTYH) are Cytoplasmic-facing.

The protein belongs to the major facilitator superfamily. Sugar transporter (TC 2.A.1.1) family.

The protein localises to the membrane. In Saccharomyces cerevisiae (strain ATCC 204508 / S288c) (Baker's yeast), this protein is Probable metabolite transport protein YDR387C.